The primary structure comprises 299 residues: tRNA dimethylallyltransferase (299 aa).

An ATP-binding site is contributed by 13–20 (GPTASGKT). A substrate-binding site is contributed by 15–20 (TASGKT). The interval 38–41 (DSRQ) is interaction with substrate tRNA.

This sequence belongs to the IPP transferase family. In terms of assembly, monomer. Mg(2+) serves as cofactor.

It carries out the reaction adenosine(37) in tRNA + dimethylallyl diphosphate = N(6)-dimethylallyladenosine(37) in tRNA + diphosphate. Functionally, catalyzes the transfer of a dimethylallyl group onto the adenine at position 37 in tRNAs that read codons beginning with uridine, leading to the formation of N6-(dimethylallyl)adenosine (i(6)A). This Prochlorococcus marinus (strain SARG / CCMP1375 / SS120) protein is tRNA dimethylallyltransferase.